A 251-amino-acid polypeptide reads, in one-letter code: MITIKNQEQIQKMKIAGQVLAKGLNLLKSMIKPGVNCLDLDKAFEEFIKQNGCESNFKNYQGFPKTICISINDQLIHGIPRDRVLLDGDVVSIDAGCMYEKWHADSAFTMVCGIAKNKKNDILIRVTEEALELAIAELKPGIRVGTIGSIIQNYVESFDFSVPRDYTGHGIGLALHEDPYIPNYGIPNTGIRLQEGMVICIEPMVQMGTYKTKIADDKWTVYSADHSITAHFEHTILITKDGCEVLTKTER.

Position 77 (His-77) interacts with substrate. The a divalent metal cation site is built by Asp-94, Asp-105, and His-169. His-176 is a binding site for substrate. 2 residues coordinate a divalent metal cation: Glu-202 and Glu-233.

Belongs to the peptidase M24A family. Methionine aminopeptidase type 1 subfamily. In terms of assembly, monomer. Co(2+) serves as cofactor. The cofactor is Zn(2+). Requires Mn(2+) as cofactor. Fe(2+) is required as a cofactor.

The enzyme catalyses Release of N-terminal amino acids, preferentially methionine, from peptides and arylamides.. In terms of biological role, removes the N-terminal methionine from nascent proteins. The N-terminal methionine is often cleaved when the second residue in the primary sequence is small and uncharged (Met-Ala-, Cys, Gly, Pro, Ser, Thr, or Val). Requires deformylation of the N(alpha)-formylated initiator methionine before it can be hydrolyzed. The protein is Methionine aminopeptidase of Mycoplasma capricolum subsp. capricolum (strain California kid / ATCC 27343 / NCTC 10154).